We begin with the raw amino-acid sequence, 349 residues long: MDALMNFGTGIFGGAWPAVWTLIKIVLIVAPMMLGVAYLTYFERKVIGYMQVRIGPNRVGPWGLIQPIADGLKLLMKEIIVPSGANKGIFIIAPMLAIAPALAAWAVVPFTDSLVLANIDASLLYIMAITSMGVYGIILSGWASNSKYAFLGAMRSAAQMVSYEISMGFSLICVLMVSNSLNLVEIVNVQNQGRFAGWGLSFLSWNWLPLFPMFLVYLISGVAETNRAPFDVAEGESEIVAGFHVEYSGMAFAVFFLAEYANMILVSALTSIMFLGGWLSPVSFLPDGILWLFAKMSAILFLFLWFRATFPRYRYDQLMRLGWKVFVPICLIWLVVVGVWMMSPLNIWK.

8 helical membrane-spanning segments follow: residues 20-42 (WTLIKIVLIVAPMMLGVAYLTYF), 88-108 (GIFIIAPMLAIAPALAAWAVV), 123-143 (LLYIMAITSMGVYGIILSGWA), 167-187 (MGFSLICVLMVSNSLNLVEIV), 202-222 (FLSWNWLPLFPMFLVYLISGV), 249-269 (GMAFAVFFLAEYANMILVSAL), 284-304 (FLPDGILWLFAKMSAILFLFL), and 325-345 (VFVPICLIWLVVVGVWMMSPL).

It belongs to the complex I subunit 1 family. As to quaternary structure, NDH-1 is composed of 14 different subunits. Subunits NuoA, H, J, K, L, M, N constitute the membrane sector of the complex.

It localises to the cell inner membrane. It catalyses the reaction a quinone + NADH + 5 H(+)(in) = a quinol + NAD(+) + 4 H(+)(out). Functionally, NDH-1 shuttles electrons from NADH, via FMN and iron-sulfur (Fe-S) centers, to quinones in the respiratory chain. The immediate electron acceptor for the enzyme in this species is believed to be ubiquinone. Couples the redox reaction to proton translocation (for every two electrons transferred, four hydrogen ions are translocated across the cytoplasmic membrane), and thus conserves the redox energy in a proton gradient. This subunit may bind ubiquinone. The chain is NADH-quinone oxidoreductase subunit H from Dechloromonas aromatica (strain RCB).